Reading from the N-terminus, the 303-residue chain is tRNA dimethylallyltransferase 1 (303 aa).

17–24 (GPTACGKT) contributes to the ATP binding site. 19–24 (TACGKT) contributes to the substrate binding site. The interval 42-45 (DSRQ) is interaction with substrate tRNA.

The protein belongs to the IPP transferase family. As to quaternary structure, monomer. It depends on Mg(2+) as a cofactor.

The catalysed reaction is adenosine(37) in tRNA + dimethylallyl diphosphate = N(6)-dimethylallyladenosine(37) in tRNA + diphosphate. In terms of biological role, catalyzes the transfer of a dimethylallyl group onto the adenine at position 37 in tRNAs that read codons beginning with uridine, leading to the formation of N6-(dimethylallyl)adenosine (i(6)A). The chain is tRNA dimethylallyltransferase 1 from Hahella chejuensis (strain KCTC 2396).